The following is a 65-amino-acid chain: Ovary maturating parsin (65 aa).

Residues 17–28 show a composition bias toward low complexity; that stretch reads PAAPAVAPAAPA. The tract at residues 17-36 is disordered; it reads PAAPAVAPAAPASWPHQQRR.

Monomer.

Functionally, neurohormone that anticipates ovarian maturation. Acts as a true gonadotropin and stimulates vitellogenin biosynthesis. The chain is Ovary maturating parsin from Locusta migratoria (Migratory locust).